A 917-amino-acid chain; its full sequence is Protein Ami (917 aa).

An N-terminal signal peptide occupies residues 1-30; it reads MKKLVKSAVVFAGLVFIGTSATMITEKASA. An N-acetylmuramoyl-L-alanine amidase domain is found at 118–245; that stretch reads KPEGIVIHET…YLGGTTHTDP (128 aa). A GW repeat region, necessary and sufficient for cell surface attachment region spans residues 262–917; it reads LINEKYKAMQ…KAANLSAKKQ (656 aa). GW domains lie at 279–358, 361–435, 440–519, 522–596, 601–679, 682–756, 761–840, and 843–917; these read YDKA…TFYT, MEKT…TTKY, MEKN…ATQY, and MEKN…AKKQ.

The protein in the N-terminal section; belongs to the N-acetylmuramoyl-L-alanine amidase 2 family.

The protein resides in the cell surface. It is found in the cell membrane. A bacteriolysin able to lyse both L.monocytogenes and S.aureus. The protein is Protein Ami of Listeria monocytogenes serotype 1/2a (strain EGD / Mackaness).